A 586-amino-acid polypeptide reads, in one-letter code: Protein BONZAI 2 (586 aa).

G2 carries N-myristoyl glycine lipidation. C2 domains follow at residues 25–164 and 176–303; these read SAAT…ALEL and PQHN…NLAL. Ca(2+) is bound by residues D62, D68, D121, and D123. Residues 344 to 563 enclose the VWFA domain; that stretch reads NFMVAIDFTA…SVVEALLAEL (220 aa).

The protein belongs to the copine family. As to quaternary structure, interacts with BAP1 and BAP2. The cofactor is Ca(2+). Expressed in roots, leaves and stems. Expressed in young growing tissues.

The protein resides in the cell membrane. Its function is as follows. Negative regulator of cell death and defense responses. May repress a number of R genes and may have effects in promoting growth and development. May function in membrane trafficking and in fusion of vesicles with plasma membrane. In Arabidopsis thaliana (Mouse-ear cress), this protein is Protein BONZAI 2 (BON2).